The primary structure comprises 466 residues: Soluble pyridine nucleotide transhydrogenase (466 aa).

36–45 (ERYQNVGGGC) contributes to the FAD binding site.

Belongs to the class-I pyridine nucleotide-disulfide oxidoreductase family. The cofactor is FAD.

Its subcellular location is the cytoplasm. The catalysed reaction is NAD(+) + NADPH = NADH + NADP(+). Its function is as follows. Conversion of NADPH, generated by peripheral catabolic pathways, to NADH, which can enter the respiratory chain for energy generation. The polypeptide is Soluble pyridine nucleotide transhydrogenase (Escherichia fergusonii (strain ATCC 35469 / DSM 13698 / CCUG 18766 / IAM 14443 / JCM 21226 / LMG 7866 / NBRC 102419 / NCTC 12128 / CDC 0568-73)).